The following is a 337-amino-acid chain: Serpentine receptor class beta-6 (337 aa).

Transmembrane regions (helical) follow at residues 20–40 (QFYT…LIIF), 62–82 (ILIS…IPFL), 98–118 (IFQN…LGIT), 138–158 (IGVF…YFFF), 183–203 (WLCY…YFLV), 234–254 (TFIS…TLII), and 273–293 (GVYI…CVIL).

The protein belongs to the nematode receptor-like protein srb family. In terms of tissue distribution, expressed in the ADL, ADF and ASH chemosensory neurons in the head and in the PHA and PHB chemosensory neurons in the tail. Low expression also observed in the egg-laying structures in the mid-body region.

It is found in the cell membrane. Mediates recognition and avoidance of Streptomyces species by detecting dodecanoic acid secreted by the bacteria. Also mediates avoidance of decanoic acid which is not secreted by Streptomyces species but this may represent an additional important avoidance response in the environment. In Caenorhabditis elegans, this protein is Serpentine receptor class beta-6 (srb-6).